The sequence spans 534 residues: MSIPKEIIFEEEAREFLLKGIKKLADVVAFTLGPKGRNVGLEKSWGAPTITNDGASIIRDIQLEDKYENMGVAMAKEVVQKIKEKCGDGTTSGALLLRSLVEAGIKNISSGASPIGIKRGMDKAVEVVVKAIEKAAIPVKTKQETRNVAVVSASGNQEIGELIAEAMEKVSNSGAITIEEGKGTETSIEVVKGMKFDRGYVSPYLCTNLEKMIVEMDHAQILLVDKKISSIHELLPVLQATAASGRELLIIAEDIDGDALSTLVVNKLRGTLKVAAVKAPGFGDRRKAMLQDIATLTAATVVSEELGISLKEIPATALGSAEKVTVTKESTTIVGGTGAQEDIAARIKQIDAEINLAQSSYDKEKLEERRAKLSGGVAVIRVGAATETEMKQKKQMFDDSLNSTKAALEEGIVPGGGVALLNASKTLGQLKLEGDEAVGAKIVLQACETPIKQIVQNTGFDGSVVLNEVLNSPANFGFNALTEKVEDLIAAGVIDPAKVIKNTLTYAASTAGIVLLSEALIADADDEEEENSTK.

Residues 31-34 (TLGP), G416, 479-481 (NAL), and D495 each bind ATP.

Belongs to the chaperonin (HSP60) family. As to quaternary structure, forms a cylinder of 14 subunits composed of two heptameric rings stacked back-to-back. Interacts with the co-chaperonin GroES.

Its subcellular location is the cytoplasm. It carries out the reaction ATP + H2O + a folded polypeptide = ADP + phosphate + an unfolded polypeptide.. In terms of biological role, together with its co-chaperonin GroES, plays an essential role in assisting protein folding. The GroEL-GroES system forms a nano-cage that allows encapsulation of the non-native substrate proteins and provides a physical environment optimized to promote and accelerate protein folding. The polypeptide is Chaperonin GroEL 3 (Protochlamydia amoebophila (strain UWE25)).